Here is a 396-residue protein sequence, read N- to C-terminus: Metallophosphoesterase 1 (396 aa).

Residues 27–47 traverse the membrane as a helical segment; the sequence is IAVVFAVLLFCEFLIYYLAIF. D77, D119, N157, H249, H303, and H305 together coordinate a divalent metal cation. Residues 356–376 form a helical membrane-spanning segment; that stretch reads VVLVIYCGAVGFLVVLTLSHL. Positions 392–396 match the Di-lysine motif motif; the sequence is KRKTR.

Belongs to the metallophosphoesterase superfamily. MPPE1 family. Interacts with GPI-anchor proteins (via the GPI portion). Interacts with TMED10. Mn(2+) serves as cofactor.

Its subcellular location is the endoplasmic reticulum-Golgi intermediate compartment membrane. Its function is as follows. Metallophosphoesterase that catalyzes the removal of a side-chain ethanolamine-phosphate (EtNP) from the second mannose of the GPI-anchor protein intermediate. Participates in the glycan remodeling steps of GPI-anchor maturation to allow an efficient transport of GPI-anchor proteins from the endoplasmic reticulum to the Golgi. The polypeptide is Metallophosphoesterase 1 (Macaca fascicularis (Crab-eating macaque)).